The chain runs to 215 residues: 7-methyl-GTP pyrophosphatase (215 aa).

Catalysis depends on D79, which acts as the Proton acceptor.

It belongs to the Maf family. YceF subfamily. A divalent metal cation serves as cofactor.

Its subcellular location is the cytoplasm. The enzyme catalyses N(7)-methyl-GTP + H2O = N(7)-methyl-GMP + diphosphate + H(+). Its function is as follows. Nucleoside triphosphate pyrophosphatase that hydrolyzes 7-methyl-GTP (m(7)GTP). May have a dual role in cell division arrest and in preventing the incorporation of modified nucleotides into cellular nucleic acids. The protein is 7-methyl-GTP pyrophosphatase of Burkholderia thailandensis (strain ATCC 700388 / DSM 13276 / CCUG 48851 / CIP 106301 / E264).